The primary structure comprises 412 residues: Acetylornithine aminotransferase (412 aa).

Residues 109 to 110 and Phe-142 each bind pyridoxal 5'-phosphate; that span reads GA. Arg-145 contacts N(2)-acetyl-L-ornithine. 233–236 contacts pyridoxal 5'-phosphate; it reads DEVQ. Lys-262 carries the post-translational modification N6-(pyridoxal phosphate)lysine. Ser-289 serves as a coordination point for N(2)-acetyl-L-ornithine. Pyridoxal 5'-phosphate is bound at residue Thr-290.

Belongs to the class-III pyridoxal-phosphate-dependent aminotransferase family. ArgD subfamily. As to quaternary structure, homodimer. Requires pyridoxal 5'-phosphate as cofactor.

Its subcellular location is the cytoplasm. It carries out the reaction N(2)-acetyl-L-ornithine + 2-oxoglutarate = N-acetyl-L-glutamate 5-semialdehyde + L-glutamate. It participates in amino-acid biosynthesis; L-arginine biosynthesis; N(2)-acetyl-L-ornithine from L-glutamate: step 4/4. This is Acetylornithine aminotransferase from Thermosynechococcus vestitus (strain NIES-2133 / IAM M-273 / BP-1).